A 201-amino-acid polypeptide reads, in one-letter code: 3-isopropylmalate dehydratase small subunit (201 aa).

This sequence belongs to the LeuD family. LeuD type 1 subfamily. In terms of assembly, heterodimer of LeuC and LeuD.

It catalyses the reaction (2R,3S)-3-isopropylmalate = (2S)-2-isopropylmalate. The protein operates within amino-acid biosynthesis; L-leucine biosynthesis; L-leucine from 3-methyl-2-oxobutanoate: step 2/4. Its function is as follows. Catalyzes the isomerization between 2-isopropylmalate and 3-isopropylmalate, via the formation of 2-isopropylmaleate. In Ruegeria pomeroyi (strain ATCC 700808 / DSM 15171 / DSS-3) (Silicibacter pomeroyi), this protein is 3-isopropylmalate dehydratase small subunit.